The chain runs to 59 residues: Aedesin (59 aa).

Residues 1-23 (MNFTKLFAIVLLAALVLLGQTEA) form the signal peptide.

This sequence belongs to the cecropin family. As to expression, salivary gland (at protein level).

The protein localises to the secreted. Its function is as follows. Antimicrobial peptide. Exhibits antibacterial activity against Gram-negative bacteria, such as Escherichia coli, Pseudomonas aeruginosa, Acinetobacter baumannii and Klebsiella pneumoniae. Shows no antibacterial effects against Gram-positive bacteria, such as Staphylococcus aureus, Enterococcus faecalis and Enterococcus faecium. Exhibits antiviral activity against all four dengue virus serotypes and chikungunya virus. Exhibits leishmanicidal activity. Partially neutralizes lipopolysaccharides (LPS). Exhibits anti-inflammatory properties: inhibits LPS-induced iNOS/NOS2 transcription, nitric oxide (NO) and pro-inflammatory cytokine production in mouse macrophages and human peripheral blood mononuclear cells (PBMCs); inhibits LPS-induced activation of MAPK and NF-kappa-B signaling pathways in mouse macrophages. The chain is Aedesin from Aedes aegypti (Yellowfever mosquito).